We begin with the raw amino-acid sequence, 321 residues long: MFRAQSFLPVLALVLRVAAHGYVDQVTIGGQVYTGYQPYQDPYESPVPQRIERAIPGNGPVEDLTLLDIQCNGSGGSGTKPAALIASAAAGDEIAFHWTTWPSSHVGPVITYMGKVPSNTDITSYSPTGSDVIWFKIDEAGYENGKWAATDIMSAQNSTWTVTIPKALAPGQYIVRHEIIALHQAETYPGAQFYPDCFQVQVTGPGTETPTSQALVSFPGGYTPTTPGITFNVYSGSITSYPIPGPPVWTSNEAFSGGSSSSAAASSTAVASSTADSSSSAAATQSSSAAPSSSAIGTSTASSAAASGTAIVDANTCMNSA.

A signal peptide spans 1–21; the sequence is MFRAQSFLPVLALVLRVAAHG. Cu(2+) is bound at residue His20. A disulfide bridge links Cys71 with Cys197. An N-linked (GlcNAc...) asparagine glycan is attached at Asn72. His105 contributes to the Cu(2+) binding site. Asn157 is a glycosylation site (N-linked (GlcNAc...) asparagine). Residues His183 and Gln192 each contribute to the O2 site. Cu(2+) is bound at residue Tyr194. Residues 278 to 306 form a disordered region; the sequence is SSSAAATQSSSAAPSSSAIGTSTASSAAA. The GPI-anchor amidated serine moiety is linked to residue Ser293. The propeptide at 294–321 is removed in mature form; sequence SAIGTSTASSAAASGTAIVDANTCMNSA.

It belongs to the polysaccharide monooxygenase AA9 family. Cu(2+) serves as cofactor.

It localises to the cell membrane. The catalysed reaction is [(1-&gt;4)-beta-D-glucosyl]n+m + reduced acceptor + O2 = 4-dehydro-beta-D-glucosyl-[(1-&gt;4)-beta-D-glucosyl]n-1 + [(1-&gt;4)-beta-D-glucosyl]m + acceptor + H2O.. Functionally, lytic polysaccharide monooxygenase (LPMO) that depolymerizes crystalline and amorphous polysaccharides via the oxidation of scissile alpha- or beta-(1-4)-glycosidic bonds, yielding C1 or C4 oxidation products. Catalysis by LPMOs requires the reduction of the active-site copper from Cu(II) to Cu(I) by a reducing agent and H(2)O(2) or O(2) as a cosubstrate. Has broad specificity, cleaving at any position along the beta-glucan backbone of xyloglucan, regardless of substitutions. Shows minor activity on glucomannan. The sequence is that of AA9 family lytic polysaccharide monooxygenase A from Gloeophyllum trabeum (strain ATCC 11539 / FP-39264 / Madison 617) (Brown rot fungus).